Here is a 72-residue protein sequence, read N- to C-terminus: Translation initiation factor IF-1 (72 aa).

Positions 1–72 constitute an S1-like domain; it reads MAKEDSIEMQ…TKGRIVFRAR (72 aa).

Belongs to the IF-1 family. In terms of assembly, component of the 30S ribosomal translation pre-initiation complex which assembles on the 30S ribosome in the order IF-2 and IF-3, IF-1 and N-formylmethionyl-tRNA(fMet); mRNA recruitment can occur at any time during PIC assembly.

Its subcellular location is the cytoplasm. In terms of biological role, one of the essential components for the initiation of protein synthesis. Stabilizes the binding of IF-2 and IF-3 on the 30S subunit to which N-formylmethionyl-tRNA(fMet) subsequently binds. Helps modulate mRNA selection, yielding the 30S pre-initiation complex (PIC). Upon addition of the 50S ribosomal subunit IF-1, IF-2 and IF-3 are released leaving the mature 70S translation initiation complex. In Idiomarina loihiensis (strain ATCC BAA-735 / DSM 15497 / L2-TR), this protein is Translation initiation factor IF-1.